We begin with the raw amino-acid sequence, 449 residues long: Phosphoglucosamine mutase (449 aa).

Catalysis depends on serine 101, which acts as the Phosphoserine intermediate. Mg(2+) contacts are provided by serine 101, aspartate 240, aspartate 242, and aspartate 244. Serine 101 carries the post-translational modification Phosphoserine.

This sequence belongs to the phosphohexose mutase family. Mg(2+) is required as a cofactor. In terms of processing, activated by phosphorylation.

The catalysed reaction is alpha-D-glucosamine 1-phosphate = D-glucosamine 6-phosphate. Catalyzes the conversion of glucosamine-6-phosphate to glucosamine-1-phosphate. This Streptococcus mutans serotype c (strain ATCC 700610 / UA159) protein is Phosphoglucosamine mutase.